The sequence spans 263 residues: UPF0739 protein C1orf74 homolog (263 aa).

The protein belongs to the UPF0739 family.

The polypeptide is UPF0739 protein C1orf74 homolog (Xenopus tropicalis (Western clawed frog)).